A 490-amino-acid chain; its full sequence is Dual specificity protein kinase CLK3 (490 aa).

The tract at residues 1–138 is disordered; that stretch reads MHHCKRYRSP…SKRSSRSVED (138 aa). A Phosphotyrosine modification is found at Y7. Residues S9, S49, S51, S67, S76, and S78 each carry the phosphoserine modification. 2 stretches are compositionally biased toward basic and acidic residues: residues 26-56 and 63-76; these read YSREHEGRLRYPSRREPPPRRSRSRSHDRIP and EHRDSDTYRCEERS. Basic residues predominate over residues 88–116; sequence RSRHRRRSRERGPYRTRKHAHHCHKRRTR. Low complexity predominate over residues 117 to 130; the sequence is SCSSASSRSQQSSK. S135 carries the post-translational modification Phosphoserine. Residues 156–472 form the Protein kinase domain; the sequence is YEIVGNLGEG…LAEALLHPFF (317 aa). ATP is bound by residues 162–170 and K186; that span reads LGEGTFGKV. D283 (proton acceptor) is an active-site residue.

It belongs to the protein kinase superfamily. CMGC Ser/Thr protein kinase family. Lammer subfamily. Autophosphorylates on all three types of residues.

The protein resides in the nucleus. The protein localises to the cytoplasm. Its subcellular location is the cytoplasmic vesicle. It is found in the secretory vesicle. It localises to the acrosome. The enzyme catalyses L-seryl-[protein] + ATP = O-phospho-L-seryl-[protein] + ADP + H(+). It catalyses the reaction L-threonyl-[protein] + ATP = O-phospho-L-threonyl-[protein] + ADP + H(+). It carries out the reaction L-tyrosyl-[protein] + ATP = O-phospho-L-tyrosyl-[protein] + ADP + H(+). Leucettine L41 inhibits its kinase activity and affects the regulation of alternative splicing mediated by phosphorylation of SR proteins. Its function is as follows. Dual specificity kinase acting on both serine/threonine and tyrosine-containing substrates. Phosphorylates serine- and arginine-rich (SR) proteins of the spliceosomal complex. May be a constituent of a network of regulatory mechanisms that enable SR proteins to control RNA splicing and can cause redistribution of SR proteins from speckles to a diffuse nucleoplasmic distribution. Phosphorylates SRSF1 and SRSF3. Regulates the alternative splicing of tissue factor (F3) pre-mRNA in endothelial cells. This is Dual specificity protein kinase CLK3 (Clk3) from Rattus norvegicus (Rat).